The chain runs to 324 residues: Methyltransferase pytC (324 aa).

Positions 1 to 28 (MTVRTAAEPPNRIEVDMDAPSLDTDSSC) are disordered.

It belongs to the methyltransferase superfamily. LaeA methyltransferase family.

It participates in secondary metabolite biosynthesis. Methyltransferase; part of the gene cluster that mediates the biosynthesis of pyranterreones, a family of antioxidative compounds. The first step of pyranonigrins biosynthesis is performed by the hybrid PKS-NRPS synthetase pytA that condenses 4 malonyl-CoA units ato the acetyl starter unit by the modular PKS of pytA. The acyl chain is then connected to an L-serine through the amide bond by the modular NRPS of pytA. A tetramic acid is formed and released from the PKS-NRPS pytA to give pyranterreone 5 with the help of the thioesterase pytI. Pyranterreone 5 could be methylated by pytC to afford pyranterreone 6. Both pyranterreones 5 and 6 are subsequently oxidized by the FAD-linked oxidoreductase pytB and the cytochrome P450 monooxygenase pytD to form the fused gamma-pyrone core, resulting in pyranterreones 7 and 11, respectively. The hydroxy group at C-8 of pyranterreones 7 and 11 are dehydrated by the aspartyl protease pytH to form a delta-7 double bond to give pyranterreones 3 and 1, 2 accordingly. The exo-methylene of pyranterreone 3 could be reduced into a pendant methyl by reductase pytE to provide pyranterreone 4, also known as cordylactam. Pyranterreone 4 can be reconverted to pyranterreone 3 through pytB-catalyzed dehydrogenation or further oxidized to pyranterreones 9 and 10. In Aspergillus terreus, this protein is Methyltransferase pytC.